The chain runs to 332 residues: Cilia- and flagella-associated protein 119 (332 aa).

The span at 1-10 shows a compositional bias: polar residues; it reads MITPRSSQSL. 3 disordered regions span residues 1 to 70, 246 to 271, and 308 to 332; these read MITP…ANLF, EDEE…EAEQ, and RLSN…SKAK. Basic and acidic residues predominate over residues 14–30; that stretch reads VQTELEHSPKLQEEPDR. Residues 49–58 show a composition bias toward polar residues; that stretch reads ESPAEATSSP. Residues 287 to 308 adopt a coiled-coil conformation; that stretch reads LNKELRQLQQLVEERLKESEER.

Specifically expressed in testis (at protein level).

It localises to the cell projection. The protein localises to the cilium. It is found in the flagellum. The protein resides in the cytoplasmic vesicle. Its subcellular location is the secretory vesicle. It localises to the acrosome. The protein localises to the cytoplasm. In Rattus norvegicus (Rat), this protein is Cilia- and flagella-associated protein 119.